A 276-amino-acid chain; its full sequence is Ribosomal RNA small subunit methyltransferase A (276 aa).

Residues Asn15, Leu17, Gly42, Glu63, Asp88, and Asn111 each coordinate S-adenosyl-L-methionine.

This sequence belongs to the class I-like SAM-binding methyltransferase superfamily. rRNA adenine N(6)-methyltransferase family. RsmA subfamily.

It is found in the cytoplasm. It catalyses the reaction adenosine(1518)/adenosine(1519) in 16S rRNA + 4 S-adenosyl-L-methionine = N(6)-dimethyladenosine(1518)/N(6)-dimethyladenosine(1519) in 16S rRNA + 4 S-adenosyl-L-homocysteine + 4 H(+). Functionally, specifically dimethylates two adjacent adenosines (A1518 and A1519) in the loop of a conserved hairpin near the 3'-end of 16S rRNA in the 30S particle. May play a critical role in biogenesis of 30S subunits. The polypeptide is Ribosomal RNA small subunit methyltransferase A (Geobacter sulfurreducens (strain ATCC 51573 / DSM 12127 / PCA)).